We begin with the raw amino-acid sequence, 995 residues long: Zinc finger protein ZFPM1 (995 aa).

Positions 1–14 are enriched in basic residues; sequence MSRRKQSNPRQIKR. Residues 1-103 form a disordered region; the sequence is MSRRKQSNPR…EAAMASPWSG (103 aa). Residues 15–36 show a composition bias toward basic and acidic residues; the sequence is SLRDMEAGEEAKAMDSSPKEQE. 2 stretches are compositionally biased toward acidic residues: residues 67 to 78 and 86 to 95; these read SPEDPEDMEGQE and EEKEEKEEEA. Residues S99 and S143 each carry the phosphoserine modification. A CCHC FOG-type 1 zinc finger spans residues 249–282; sequence VINKDVFPCKDCGIWYRSERNLQAHLLYYCASRQ. 4 residues coordinate Zn(2+): C257, C260, H273, and C278. Residue S286 is modified to Phosphoserine. 3 consecutive C2H2-type zinc fingers follow at residues 303–327, 333–355, and 361–384; these read RVCP…MRSH, FVCL…LKVH, and GVCH…VTNH. Positions 343–354 are interaction with TACC3; it reads TTKANCERHLKV. Phosphoserine occurs at positions 397, 497, and 500. The interval 424–526 is disordered; sequence PLVPADKAPT…SSPGPGELTM (103 aa). Residues 509–525 are compositionally biased toward low complexity; that stretch reads ELSSPTPGSSPGPGELT. A CCHC FOG-type 2 zinc finger spans residues 584-617; the sequence is FSGTKGATCFECEITFNNINNFYVHKRLYCSGRR. Positions 592, 595, 608, and 613 each coordinate Zn(2+). The segment at 616 to 694 is disordered; that stretch reads RRAPEDPPTV…SVDDAEDDPS (79 aa). The span at 630–652 shows a compositional bias: low complexity; the sequence is AATGPARAPAGAAAEPDPSRSSP. Residues S651 and S684 each carry the phosphoserine modification. Residues 690-723 form a CCHC FOG-type 3 zinc finger; sequence EDDPSRTLCEACNIRFSRHETYTVHKRYYCASRH. Residues C698, C701, H714, and C719 each coordinate Zn(2+). The tract at residues 721–827 is disordered; sequence SRHDPPPRRP…PRRQSPDAPT (107 aa). Pro residues-rich tracts occupy residues 728 to 740 and 764 to 779; these read RRPP…PGPA and GAPP…PVVP. Residues 785–800 are compositionally biased toward low complexity; sequence LPSSPRPGSASAGPAP. S803 is modified (phosphoserine). The tract at residues 811 to 817 is interaction with CTBP2; it reads PIDLSKR. S822 carries the phosphoserine modification. A CCHC FOG-type 4 zinc finger spans residues 830-863; that stretch reads PALADYHECTACRVSFHSLEAYLAHKKYSCPAAP. Residues C838, C841, H854, and C859 each contribute to the Zn(2+) site. The C2H2-type 4 zinc finger occupies 868–891; sequence ALCPYCPPNGRVRGDLVEHLRQAH. Residues 892–960 form a disordered region; that stretch reads GLQVAKPAAS…APAPAPGGGG (69 aa). The segment covering 908–922 has biased composition (basic and acidic residues); that stretch reads TPAERAPRDSPDGRA. Residues S925 and S927 each carry the phosphoserine modification. The CCHC FOG-type 5 zinc finger occupies 957-990; sequence GGGGGHRYCRLCNIRFSSLSTFIAHKKYYCSSHA. Zn(2+)-binding residues include C965, C968, H981, and C986.

It belongs to the FOG (Friend of GATA) family. As to quaternary structure, interacts with the N-terminal zinc-finger of GATA1, GATA2 and GATA3. Interacts with corepressor CTBP2; this interaction is however not essential for corepressor activity in erythropoiesis. Interacts with TACC3. In terms of tissue distribution, mainly expressed in hematopoietic tissues. Expressed in the spleen, a primary site of hematopoiesis in the adult mouse, as well as in the liver and testis, but not in the heart, brain, lung, kidney, or skeletal muscle. Among hematopoietic cell lines, it is strongly expressed in erythroid and megakaryocytic cell lines. Expressed at low level in several lymphoid and early myeloid cell lines. Not expressed in mast cell and macrophage lines. Expressed in the heart, where it colocalizes with GATA4, GATA5 and GATA6.

Its subcellular location is the nucleus. In terms of biological role, transcription regulator that plays an essential role in erythroid and megakaryocytic cell differentiation. Essential cofactor that acts via the formation of a heterodimer with transcription factors of the GATA family GATA1, GATA2 and GATA3. Such heterodimer can both activate or repress transcriptional activity, depending on the cell and promoter context. The heterodimer formed with GATA proteins is essential to activate expression of genes such as NFE2, ITGA2B, alpha- and beta-globin, while it represses expression of KLF1. May be involved in regulation of some genes in gonads. May also be involved in cardiac development, in a non-redundant way with ZFPM2/FOG2. The polypeptide is Zinc finger protein ZFPM1 (Zfpm1) (Mus musculus (Mouse)).